The following is a 641-amino-acid chain: MVASTPCPGPGPVPTQELLSTNFLEAHKLVVELLLPSYSSDVVYCDSETYTKPIPIFGNKSIVSTIGDYVLSNPNEDVSYQMVSSVLEKFPLLFHCTYKTNEEDKGIPLWKKLYNKRKFKLLNSLLVHNNKNWTPVPAIPFDRENICDASGRSVLMSEIMSTSTFQTICKNNTHYLFDMLNMERGKQGGSFLHFFASRKNSFTNFENEEMDSHVLSNIAKFICNEKEKLDSFIPANGKIPCPDKTNDEGYIPLEIAIMEDNYPALLYLVCRYGASWANTYGDHNESLKAFAIRNDAKDCLEIIEFISDHYSFNKNVTKEEFVKEKTVECVGCLYDIEDEKRCYKLPCGHFMHTFCLSNKCSKANFRCVKCFQTFDDTIFRKCPPTIQWKMGINQTTNHKEMDLFNRAFDTYLDFICSYNVKLDKKSKPKHKPENKKVEEELAKRTAEIEEAMKKKEEELTKRTAEIEEAIKKKEEELAKRTAEIEEAMKKKEEEELSKYNKIIEKGKRRLNEECVKLRDISTAAINMYKEKVRINGVLLKDSDQELAEAKERLRKILLLEEETKLDRFLFRPKRVEERIFLTKDDETLAFKLALEKKTEDIIAKKNNQKGSERRDGEYTITSHIEKLPQSTALASVCVLNE.

The RING-type; atypical zinc finger occupies 329-371 (CVGCLYDIEDEKRCYKLPCGHFMHTFCLSNKCSKANFRCVKCF).

It catalyses the reaction S-ubiquitinyl-[E2 ubiquitin-conjugating enzyme]-L-cysteine + [acceptor protein]-L-lysine = [E2 ubiquitin-conjugating enzyme]-L-cysteine + N(6)-ubiquitinyl-[acceptor protein]-L-lysine.. The protein operates within protein modification; protein ubiquitination. Functionally, probable E3 ubiquitin-protein ligase which accepts ubiquitin from an E2 ubiquitin-conjugating enzyme in the form of a thioester and then directly transfers the ubiquitin to targeted substrates. This chain is RING finger containing E3 ubiquitin-protein ligase WSV403, found in White spot syndrome virus (isolate Shrimp/China/Tongan/1996) (WSSV).